A 185-amino-acid chain; its full sequence is Peptidyl-tRNA hydrolase (185 aa).

Tyr14 provides a ligand contact to tRNA. Residue His19 is the Proton acceptor of the active site. Tyr64, Asn66, and Asn112 together coordinate tRNA.

The protein belongs to the PTH family. In terms of assembly, monomer.

The protein resides in the cytoplasm. It catalyses the reaction an N-acyl-L-alpha-aminoacyl-tRNA + H2O = an N-acyl-L-amino acid + a tRNA + H(+). Hydrolyzes ribosome-free peptidyl-tRNAs (with 1 or more amino acids incorporated), which drop off the ribosome during protein synthesis, or as a result of ribosome stalling. In terms of biological role, catalyzes the release of premature peptidyl moieties from peptidyl-tRNA molecules trapped in stalled 50S ribosomal subunits, and thus maintains levels of free tRNAs and 50S ribosomes. The protein is Peptidyl-tRNA hydrolase of Shouchella clausii (strain KSM-K16) (Alkalihalobacillus clausii).